The sequence spans 288 residues: MTAGDPMRLHPGHALSSFTEHLRALAPELLGPNRFAALDGATGSSGGTGAKDIAPHGTTIVAVSYRGGVLIAGDRRATQGNLLASRDMDKVYITDTFSAAGIAGTAGMAVELVRLFAVELEHYEKIEGVPLTFDGKANKLSKMVRDNLPAALQGLAVVPVLVGYDERAGDPDRAGRIVSYDVVGGRSEERFGYTAVGSGSMFAKTSLKKLYAKGIDQARALRIALESLYDASDDDTATGGPDLLRGIYPTAVVIDAEGALEVPESRLEEIARGIVADRTAAQEGSAGA.

Positions 1–57 are cleaved as a propeptide — removed in mature form; by autocatalysis; it reads MTAGDPMRLHPGHALSSFTEHLRALAPELLGPNRFAALDGATGSSGGTGAKDIAPHG. Residue threonine 58 is the Nucleophile of the active site.

The protein belongs to the peptidase T1B family. As to quaternary structure, the 20S proteasome core is composed of 14 alpha and 14 beta subunits that assemble into four stacked heptameric rings, resulting in a barrel-shaped structure. The two inner rings, each composed of seven catalytic beta subunits, are sandwiched by two outer rings, each composed of seven alpha subunits. The catalytic chamber with the active sites is on the inside of the barrel. Has a gated structure, the ends of the cylinder being occluded by the N-termini of the alpha-subunits. Is capped by the proteasome-associated ATPase, ARC.

It is found in the cytoplasm. The enzyme catalyses Cleavage of peptide bonds with very broad specificity.. Its pathway is protein degradation; proteasomal Pup-dependent pathway. With respect to regulation, the formation of the proteasomal ATPase ARC-20S proteasome complex, likely via the docking of the C-termini of ARC into the intersubunit pockets in the alpha-rings, may trigger opening of the gate for substrate entry. Interconversion between the open-gate and close-gate conformations leads to a dynamic regulation of the 20S proteasome proteolysis activity. In terms of biological role, component of the proteasome core, a large protease complex with broad specificity involved in protein degradation. The chain is Proteasome subunit beta from Nocardia farcinica (strain IFM 10152).